The following is a 58-amino-acid chain: uncharacterized protein (58 aa).

This is an uncharacterized protein from Saccharomyces cerevisiae (strain ATCC 204508 / S288c) (Baker's yeast).